The primary structure comprises 427 residues: Acetyl-CoA acetyltransferase, mitochondrial (427 aa).

The transit peptide at 1 to 33 (MAVLAALLRGGARSRSPLLRRLVQEIRYVERSY) directs the protein to the mitochondrion. At lysine 66 the chain carries N6-acetyllysine; alternate. Lysine 66 carries the post-translational modification N6-succinyllysine; alternate. Lysine 78 is subject to N6-succinyllysine. Cysteine 126 functions as the Acyl-thioester intermediate in the catalytic mechanism. An N6-acetyllysine; alternate mark is found at lysine 174, lysine 181, lysine 190, and lysine 202. Residues lysine 174, lysine 181, lysine 190, and lysine 202 each carry the N6-succinyllysine; alternate modification. A CoA-binding site is contributed by tyrosine 219. Residue tyrosine 219 coordinates K(+). An N6-acetyllysine; alternate mark is found at lysine 223 and lysine 230. Lysine 223 and lysine 230 each carry N6-succinyllysine; alternate. Lysine 243 carries the post-translational modification N6-succinyllysine. N6-acetyllysine occurs at positions 251 and 257. Residues 258–260 (RVD) and lysine 263 contribute to the CoA site. Position 263 is an N6-acetyllysine; alternate (lysine 263). Lysine 263 carries the post-translational modification N6-succinyllysine; alternate. 2 positions are modified to N6-succinyllysine: lysine 266 and lysine 268. N6-acetyllysine is present on lysine 273. 3 residues coordinate K(+): alanine 280, alanine 281, and alanine 283. Position 284 (serine 284) interacts with CoA. Lysine 338 carries the post-translational modification N6-acetyllysine. Valine 381 serves as a coordination point for K(+). Cysteine 413 acts as the Proton donor/acceptor in catalysis.

The protein belongs to the thiolase-like superfamily. Thiolase family. Homotetramer. In terms of processing, succinylation at Lys-268, adjacent to a coenzyme A binding site. Desuccinylated by SIRT5.

Its subcellular location is the mitochondrion. The enzyme catalyses 2 acetyl-CoA = acetoacetyl-CoA + CoA. It carries out the reaction propanoyl-CoA + acetyl-CoA = 2-methyl-3-oxobutanoyl-CoA + CoA. It participates in lipid metabolism; fatty acid beta-oxidation. With respect to regulation, activated by potassium ions, but not sodium ions. This is one of the enzymes that catalyzes the last step of the mitochondrial beta-oxidation pathway, an aerobic process breaking down fatty acids into acetyl-CoA. Using free coenzyme A/CoA, catalyzes the thiolytic cleavage of medium- to long-chain 3-oxoacyl-CoAs into acetyl-CoA and a fatty acyl-CoA shortened by two carbon atoms. The activity of the enzyme is reversible and it can also catalyze the condensation of two acetyl-CoA molecules into acetoacetyl-CoA. Thereby, it plays a major role in ketone body metabolism. This chain is Acetyl-CoA acetyltransferase, mitochondrial (ACAT1), found in Macaca fascicularis (Crab-eating macaque).